We begin with the raw amino-acid sequence, 343 residues long: tRNA N6-adenosine threonylcarbamoyltransferase (343 aa).

His111 and His115 together coordinate Fe cation. Substrate-binding positions include 135 to 139 (VLSGG), Asp168, Gly181, and Asn280. Asp306 contributes to the Fe cation binding site.

Belongs to the KAE1 / TsaD family. The cofactor is Fe(2+).

Its subcellular location is the cytoplasm. The catalysed reaction is L-threonylcarbamoyladenylate + adenosine(37) in tRNA = N(6)-L-threonylcarbamoyladenosine(37) in tRNA + AMP + H(+). Its function is as follows. Required for the formation of a threonylcarbamoyl group on adenosine at position 37 (t(6)A37) in tRNAs that read codons beginning with adenine. Is involved in the transfer of the threonylcarbamoyl moiety of threonylcarbamoyl-AMP (TC-AMP) to the N6 group of A37, together with TsaE and TsaB. TsaD likely plays a direct catalytic role in this reaction. The chain is tRNA N6-adenosine threonylcarbamoyltransferase from Protochlamydia amoebophila (strain UWE25).